A 511-amino-acid polypeptide reads, in one-letter code: uncharacterized protein (511 aa).

The LisH domain occupies Ile-13 to Asn-45. Positions Pro-172–Pro-212 are disordered. A compositionally biased stretch (polar residues) spans Asn-197 to Ser-210.

This is an uncharacterized protein from Encephalitozoon cuniculi (strain GB-M1) (Microsporidian parasite).